Reading from the N-terminus, the 320-residue chain is Zygote arrest protein 1 (320 aa).

Disordered stretches follow at residues 106-130 (ELRRRRKLNPGPPGTPQKTEGEVRY) and 155-208 (DRPA…AEGS). The 3CxxC-type zinc-finger motif lies at 222–305 (KYGYYHCREC…RQDLCGRCKG (84 aa)).

This sequence belongs to the ZAR1 family.

Its subcellular location is the cytoplasm. The protein localises to the cytoplasmic ribonucleoprotein granule. In terms of biological role, mRNA-binding protein required for maternal mRNA storage, translation and degradation during oocyte maturation. Probably promotes formation of some phase-separated membraneless compartment that stores maternal mRNAs in oocytes: acts by undergoing liquid-liquid phase separation upon binding to maternal mRNAs. Binds to the 3'-UTR of maternal mRNAs, inhibiting their translation. The chain is Zygote arrest protein 1 from Takifugu rubripes (Japanese pufferfish).